A 314-amino-acid chain; its full sequence is uncharacterized protein (314 aa).

Basic residues-rich tracts occupy residues 1 to 16 (MAGN…KAGT) and 49 to 65 (AAKR…RRPA). The interval 1–73 (MAGNSKRRGA…PARKTDETEL (73 aa)) is disordered. G266, I286, and L295 together coordinate S-adenosyl-L-methionine.

This sequence belongs to the class IV-like SAM-binding methyltransferase superfamily. RNA methyltransferase TrmH family.

This is an uncharacterized protein from Mycobacterium sp. (strain KMS).